A 471-amino-acid chain; its full sequence is UDP-N-acetylmuramoylalanine--D-glutamate ligase (471 aa).

Gly-127–Thr-133 provides a ligand contact to ATP.

Belongs to the MurCDEF family.

Its subcellular location is the cytoplasm. It catalyses the reaction UDP-N-acetyl-alpha-D-muramoyl-L-alanine + D-glutamate + ATP = UDP-N-acetyl-alpha-D-muramoyl-L-alanyl-D-glutamate + ADP + phosphate + H(+). It participates in cell wall biogenesis; peptidoglycan biosynthesis. Cell wall formation. Catalyzes the addition of glutamate to the nucleotide precursor UDP-N-acetylmuramoyl-L-alanine (UMA). The protein is UDP-N-acetylmuramoylalanine--D-glutamate ligase of Colwellia psychrerythraea (strain 34H / ATCC BAA-681) (Vibrio psychroerythus).